Here is a 30-residue protein sequence, read N- to C-terminus: HAEGTYTSDVSSYLQDQAAKEFVSWLKTGR.

The residue at position 30 (Arg-30) is an Arginine amide.

Belongs to the glucagon family.

It is found in the secreted. This is Glucagon-like peptide from Anguilla anguilla (European freshwater eel).